The primary structure comprises 499 residues: Lysine--tRNA ligase (499 aa).

Residues E408 and E415 each coordinate Mg(2+).

It belongs to the class-II aminoacyl-tRNA synthetase family. In terms of assembly, homodimer. Mg(2+) is required as a cofactor.

The protein resides in the cytoplasm. It carries out the reaction tRNA(Lys) + L-lysine + ATP = L-lysyl-tRNA(Lys) + AMP + diphosphate. The protein is Lysine--tRNA ligase of Thermoanaerobacter pseudethanolicus (strain ATCC 33223 / 39E) (Clostridium thermohydrosulfuricum).